Consider the following 100-residue polypeptide: Small ribosomal subunit protein bS20 (100 aa).

Residues 1-20 are compositionally biased toward basic residues; the sequence is MASGKPKKKNPRLASGRKRV. Positions 1-21 are disordered; it reads MASGKPKKKNPRLASGRKRVR.

The protein belongs to the bacterial ribosomal protein bS20 family.

In terms of biological role, binds directly to 16S ribosomal RNA. The protein is Small ribosomal subunit protein bS20 of Albidiferax ferrireducens (strain ATCC BAA-621 / DSM 15236 / T118) (Rhodoferax ferrireducens).